Reading from the N-terminus, the 139-residue chain is Ribonuclease VapC39 (139 aa).

The region spanning leucine 4–alanine 133 is the PINc domain. Residues aspartate 6 and aspartate 106 each contribute to the Mg(2+) site.

The protein belongs to the PINc/VapC protein family. Requires Mg(2+) as cofactor.

Toxic component of a type II toxin-antitoxin (TA) system. An RNase. Its toxic effect is neutralized by coexpression with cognate antitoxin VapB39. This Mycobacterium tuberculosis (strain CDC 1551 / Oshkosh) protein is Ribonuclease VapC39.